The primary structure comprises 709 residues: Dibasic-processing endoprotease (709 aa).

The signal sequence occupies residues 1-22 (MHPALLCGPILAIFLQFLVSSC). 2 propeptides span residues 23–82 (SPLE…IRKR) and 83–102 (GIDA…RYKR). At 103-668 (DASESDELLN…QPVLEPSYRE (566 aa)) the chain is on the lumenal side. The Peptidase S8 domain occupies 128–440 (QWHIFNSNNP…FGKLDASKFV (313 aa)). N155 carries N-linked (GlcNAc...) asparagine glycosylation. Catalysis depends on charge relay system residues D162 and H200. Intrachain disulfides connect C216–C363 and C308–C338. S371 (charge relay system) is an active-site residue. A P/Homo B domain is found at 449 to 588 (VNPQTWLIAP…QLALWGESEN (140 aa)). N-linked (GlcNAc...) asparagine glycans are attached at residues N463, N471, and N620. The helical transmembrane segment at 669–693 (IVAFITFFLLFAFIFVAVIWTWISA) threads the bilayer. The Cytoplasmic segment spans residues 694–709 (FWKAKAPPPLSQQEIA).

This sequence belongs to the peptidase S8 family. Furin subfamily. Requires Ca(2+) as cofactor. N-glycosylated.

The protein resides in the golgi apparatus. Its subcellular location is the trans-Golgi network membrane. In terms of biological role, membrane-bound, subtilisin-like serine protease that processes the P-factor precursor and other precursor proteins. Essential for cell viability. Cleaves substrate on the C-terminal side of dibasic residues. This Schizosaccharomyces pombe (strain 972 / ATCC 24843) (Fission yeast) protein is Dibasic-processing endoprotease (krp1).